The following is a 618-amino-acid chain: Probable arginine--tRNA ligase, cytoplasmic (618 aa).

Interaction with tRNA regions lie at residues 60–61 (ET) and 104–109 (NGIFLR). L-arginine contacts are provided by residues 146 to 151 (EFSSPN), His160, Tyr359, Asp363, and Gln387. The short motif at 149-160 (SPNIAKPFHAGH) is the 'HIGH' region element. The interaction with tRNA stretch occupies residues 496 to 510 (DTGPYLQYAHSRLSS).

Belongs to the class-I aminoacyl-tRNA synthetase family.

The protein localises to the cytoplasm. It catalyses the reaction tRNA(Arg) + L-arginine + ATP = L-arginyl-tRNA(Arg) + AMP + diphosphate. In terms of biological role, forms part of a macromolecular complex that catalyzes the attachment of specific amino acids to cognate tRNAs during protein synthesis. The chain is Probable arginine--tRNA ligase, cytoplasmic (mrs1) from Schizosaccharomyces pombe (strain 972 / ATCC 24843) (Fission yeast).